A 197-amino-acid chain; its full sequence is Dephospho-CoA kinase (197 aa).

A DPCK domain is found at Leu4 to Lys197. Position 12 to 17 (Ala12 to Thr17) interacts with ATP.

Belongs to the CoaE family.

The protein resides in the cytoplasm. It catalyses the reaction 3'-dephospho-CoA + ATP = ADP + CoA + H(+). Its pathway is cofactor biosynthesis; coenzyme A biosynthesis; CoA from (R)-pantothenate: step 5/5. Functionally, catalyzes the phosphorylation of the 3'-hydroxyl group of dephosphocoenzyme A to form coenzyme A. This chain is Dephospho-CoA kinase, found in Lactiplantibacillus plantarum (strain ATCC BAA-793 / NCIMB 8826 / WCFS1) (Lactobacillus plantarum).